The primary structure comprises 286 residues: 33 kDa chaperonin (286 aa).

Disulfide bonds link cysteine 225–cysteine 227 and cysteine 258–cysteine 261.

Belongs to the HSP33 family. Post-translationally, under oxidizing conditions two disulfide bonds are formed involving the reactive cysteines. Under reducing conditions zinc is bound to the reactive cysteines and the protein is inactive.

Its subcellular location is the cytoplasm. Redox regulated molecular chaperone. Protects both thermally unfolding and oxidatively damaged proteins from irreversible aggregation. Plays an important role in the bacterial defense system toward oxidative stress. The sequence is that of 33 kDa chaperonin from Shewanella frigidimarina (strain NCIMB 400).